Consider the following 1450-residue polypeptide: DNA-directed RNA polymerase RPB1 homolog (1450 aa).

This sequence belongs to the RNA polymerase beta' chain family. In terms of assembly, part of the viral DNA-directed RNA polymerase that consists of 8 polII-like subunits (RPB1, RPB2, RPB3, RPB5, RPB6, RPB7, RPB9, RPB10), a capping enzyme and a termination factor.

The protein resides in the virion. The catalysed reaction is RNA(n) + a ribonucleoside 5'-triphosphate = RNA(n+1) + diphosphate. Its function is as follows. Catalytic component of the DNA-directed RNA polymerase (RNAP) that catalyzes the transcription in the cytoplasm of viral DNA into RNA using the four ribonucleoside triphosphates as substrates. Forms the polymerase active center together with RPB2. Part of the core element with the central large cleft, the clamp element that moves to open and close the cleft and the jaws that are thought to grab the incoming DNA template. This African swine fever virus (isolate Pig/Kenya/KEN-50/1950) (ASFV) protein is DNA-directed RNA polymerase RPB1 homolog.